The primary structure comprises 123 residues: Cell division protein SepF (123 aa).

Belongs to the SepF family. As to quaternary structure, homodimer. Interacts with FtsZ.

It is found in the cytoplasm. Its function is as follows. Cell division protein that is part of the divisome complex and is recruited early to the Z-ring. Probably stimulates Z-ring formation, perhaps through the cross-linking of FtsZ protofilaments. Its function overlaps with FtsA. The protein is Cell division protein SepF of Tropheryma whipplei (strain TW08/27) (Whipple's bacillus).